The primary structure comprises 200 residues: GTP-dependent dephospho-CoA kinase (200 aa).

Positions 56, 57, 58, 75, and 132 each coordinate GTP.

Belongs to the GTP-dependent DPCK family.

It carries out the reaction 3'-dephospho-CoA + GTP = GDP + CoA + H(+). Its pathway is cofactor biosynthesis; coenzyme A biosynthesis. Catalyzes the GTP-dependent phosphorylation of the 3'-hydroxyl group of dephosphocoenzyme A to form coenzyme A (CoA). The chain is GTP-dependent dephospho-CoA kinase from Caldivirga maquilingensis (strain ATCC 700844 / DSM 13496 / JCM 10307 / IC-167).